Here is a 425-residue protein sequence, read N- to C-terminus: Elongation factor 1-alpha (425 aa).

The tr-type G domain occupies 5–221 (KPHMNLAVIG…DLFKMPDMPT (217 aa)). Positions 14–21 (GHIDHGKS) are G1. 14–21 (GHIDHGKS) lines the GTP pocket. Mg(2+) is bound at residue S21. The tract at residues 70-74 (GITID) is G2. The segment at 91–94 (DCPG) is G3. GTP contacts are provided by residues 91 to 95 (DCPGH) and 146 to 149 (NKMD). The interval 146–149 (NKMD) is G4. The tract at residues 185-187 (SAF) is G5.

Belongs to the TRAFAC class translation factor GTPase superfamily. Classic translation factor GTPase family. EF-Tu/EF-1A subfamily.

It localises to the cytoplasm. The enzyme catalyses GTP + H2O = GDP + phosphate + H(+). In terms of biological role, GTP hydrolase that promotes the GTP-dependent binding of aminoacyl-tRNA to the A-site of ribosomes during protein biosynthesis. The chain is Elongation factor 1-alpha from Methanocorpusculum labreanum (strain ATCC 43576 / DSM 4855 / Z).